Consider the following 240-residue polypeptide: Enolase-phosphatase E1 (240 aa).

2 residues coordinate Mg(2+): Asp9 and Glu11. Residues 129 to 130 and Lys168 each bind substrate; that span reads SS. Residue Asp195 participates in Mg(2+) binding.

It belongs to the HAD-like hydrolase superfamily. MasA/MtnC family. As to quaternary structure, monomer. It depends on Mg(2+) as a cofactor.

Its subcellular location is the cytoplasm. It is found in the nucleus. It carries out the reaction 5-methylsulfanyl-2,3-dioxopentyl phosphate + H2O = 1,2-dihydroxy-5-(methylsulfanyl)pent-1-en-3-one + phosphate. It participates in amino-acid biosynthesis; L-methionine biosynthesis via salvage pathway; L-methionine from S-methyl-5-thio-alpha-D-ribose 1-phosphate: step 3/6. Its pathway is amino-acid biosynthesis; L-methionine biosynthesis via salvage pathway; L-methionine from S-methyl-5-thio-alpha-D-ribose 1-phosphate: step 4/6. In terms of biological role, bifunctional enzyme that catalyzes the enolization of 2,3-diketo-5-methylthiopentyl-1-phosphate (DK-MTP-1-P) into the intermediate 2-hydroxy-3-keto-5-methylthiopentenyl-1-phosphate (HK-MTPenyl-1-P), which is then dephosphorylated to form the acireductone 1,2-dihydroxy-3-keto-5-methylthiopentene (DHK-MTPene). The protein is Enolase-phosphatase E1 of Candida tropicalis (strain ATCC MYA-3404 / T1) (Yeast).